The primary structure comprises 317 residues: Ribosomal protein L11 methyltransferase (317 aa).

S-adenosyl-L-methionine is bound by residues Thr158, Gly179, Asp201, and Asn244.

It belongs to the methyltransferase superfamily. PrmA family.

It localises to the cytoplasm. The enzyme catalyses L-lysyl-[protein] + 3 S-adenosyl-L-methionine = N(6),N(6),N(6)-trimethyl-L-lysyl-[protein] + 3 S-adenosyl-L-homocysteine + 3 H(+). Its function is as follows. Methylates ribosomal protein L11. The sequence is that of Ribosomal protein L11 methyltransferase from Lactococcus lactis subsp. cremoris (strain MG1363).